We begin with the raw amino-acid sequence, 123 residues long: Protein Wnt-3b (123 aa).

The O-palmitoleoyl serine; by PORCN moiety is linked to residue Ser-1. Cys-89 and Cys-104 are disulfide-bonded. N-linked (GlcNAc...) asparagine glycosylation is present at Asn-90.

It belongs to the Wnt family. In terms of processing, palmitoleoylation is required for efficient binding to frizzled receptors. Depalmitoleoylation leads to Wnt signaling pathway inhibition.

It localises to the secreted. Its subcellular location is the extracellular space. The protein localises to the extracellular matrix. Ligand for members of the frizzled family of seven transmembrane receptors. Probable developmental protein. May be a signaling molecule which affects the development of discrete regions of tissues. Is likely to signal over only few cell diameters. This is Protein Wnt-3b (WNT-3B) from Alopias vulpinus (Common thresher shark).